The following is a 431-amino-acid chain: MDFFRRHQKKVLALVGVALSSYLFIDYVKKKFFEIQGRLSSERTAKQNLRRRFEQNQQDADFTIMALLSSLTTPVMERYPVDQIKAELQSKRRPTDRVLALESSTSSSATAQTVPTMTSGATEEGEKSKTQLWQDLKRTTISRAFSLVYADALLIFFTRLQLNILGRRNYVNSVVALAQQGREGNAEGRVAPSFGDLADMGYFGDLSGSSSFGETIVDPDLDEQYLTFSWWLLNEGWVSLSERVEEAVRRVWDPVSPKAELGFDELSELIGRTQMLIDRPLNPSSPLNFLSQLLPPREQEEYVLAQNPSDTAAPIVGPTLRRLLDETADFIESPNAAEVIERLVHSGLSVFMDKLAVTFGATPADSGSPYPVVLPTAKVKLPSILANMARQAGGMAQGSPGVENEYIDVMNQVQELTSFSAVVYSSFDWAL.

Topologically, residues 1–10 are peroxisomal; the sequence is MDFFRRHQKK. Residues 11-28 form a helical membrane-spanning segment; sequence VLALVGVALSSYLFIDYV. Residues 29-431 lie on the Cytoplasmic side of the membrane; that stretch reads KKKFFEIQGR…VVYSSFDWAL (403 aa). A disordered region spans residues 95-126; sequence TDRVLALESSTSSSATAQTVPTMTSGATEEGE. Over residues 112 to 121 the composition is skewed to polar residues; it reads QTVPTMTSGA.

This sequence belongs to the peroxin-3 family.

The protein localises to the peroxisome membrane. In terms of biological role, involved in peroxisome biosynthesis. Seems to directly or indirectly sequesters components of the peroxisome biogenesis machinery. The polypeptide is Peroxisomal biogenesis factor 3 (PEX3) (Yarrowia lipolytica (strain CLIB 122 / E 150) (Yeast)).